Reading from the N-terminus, the 1241-residue chain is ATP-dependent helicase/nuclease subunit A (1241 aa).

In terms of domain architecture, UvrD-like helicase ATP-binding spans 12 to 485 (SQWTDDQWKA…IDLAKNFRSR (474 aa)). Position 33-40 (33-40 (AAAGSGKT)) interacts with ATP. The UvrD-like helicase C-terminal domain occupies 505 to 805 (GEIDYDADAE…RIMTIHKSKG (301 aa)).

Belongs to the helicase family. AddA subfamily. In terms of assembly, heterodimer of AddA and AddB/RexB. The cofactor is Mg(2+).

It carries out the reaction Couples ATP hydrolysis with the unwinding of duplex DNA by translocating in the 3'-5' direction.. The catalysed reaction is ATP + H2O = ADP + phosphate + H(+). The heterodimer acts as both an ATP-dependent DNA helicase and an ATP-dependent, dual-direction single-stranded exonuclease. Recognizes the chi site generating a DNA molecule suitable for the initiation of homologous recombination. The AddA nuclease domain is required for chi fragment generation; this subunit has the helicase and 3' -&gt; 5' nuclease activities. The sequence is that of ATP-dependent helicase/nuclease subunit A from Bacillus cereus (strain ATCC 14579 / DSM 31 / CCUG 7414 / JCM 2152 / NBRC 15305 / NCIMB 9373 / NCTC 2599 / NRRL B-3711).